The primary structure comprises 245 residues: DNA repair protein RecO (245 aa).

It belongs to the RecO family.

In terms of biological role, involved in DNA repair and RecF pathway recombination. This Pectobacterium atrosepticum (strain SCRI 1043 / ATCC BAA-672) (Erwinia carotovora subsp. atroseptica) protein is DNA repair protein RecO.